A 1170-amino-acid chain; its full sequence is Glucose transport transcription regulator RGT1 (1170 aa).

Residues 1–22 (MNELNTVSTNSSDSTKDGGTSN) show a composition bias toward polar residues. 2 disordered regions span residues 1 to 47 (MNEL…SRAC) and 77 to 149 (SFDR…SNSV). A DNA-binding region (zn(2)-C6 fungal-type) is located at residues 47-76 (CDQCRKKKIKCDYKDEKGVCSNCQRNGDRC). The segment covering 99 to 108 (RTNEIQDHNN) has biased composition (basic and acidic residues). The span at 113–138 (NTFDNSNNTLNNNTGNSGDNGINSNT) shows a compositional bias: low complexity. The segment covering 139-149 (VPSTPSRSNSV) has biased composition (polar residues). 4 positions are modified to phosphoserine: Ser-202, Ser-205, Ser-208, and Ser-229. Disordered regions lie at residues 226-254 (VQQSPITNKHTNDSGNANGSVTGSGSASG), 269-288 (APTDDHNGEQTRRSSSIPSL), 293-323 (SNSLLLGGQPQLPPPQQQSQPQAHQQKLQQG), 384-506 (AQQT…HPMT), and 944-977 (NYRPPNPPANNPTVQEGPSAMGSSPVAGNLSAAP). Positions 239–250 (SGNANGSVTGSG) are enriched in low complexity. Residues 271-280 (TDDHNGEQTR) show a composition bias toward basic and acidic residues. Residues Ser-283 and Ser-284 each carry the phosphoserine modification. Composition is skewed to low complexity over residues 293 to 302 (SNSLLLGGQP), 309 to 323 (QQSQPQAHQQKLQQG), and 385 to 397 (QQTQRPQGQQVPQ). Phosphoserine is present on residues Ser-410 and Ser-414. Positions 411–422 (APVSVTLSTDRL) are enriched in polar residues. Low complexity predominate over residues 424-444 (GNENNNGEINNNNGSNNSGSS). The segment covering 445–457 (KDTSQHSQESVTT) has biased composition (polar residues). Residues 473 to 488 (STKKRRKSYVSKKTKP) show a composition bias toward basic residues. Over residues 493–506 (SISITSKDSAHPMT) the composition is skewed to polar residues. Ser-1130 is modified (phosphoserine).

The protein belongs to the EDS1/RGT1 family. In terms of processing, glucose-induced phosphorylation regulates the DNA-binding activity. Hyperphosphorylation in cells growing on high levels of glucose does prevents DNA-binding and dephosphorylation restores DNA-binding ability.

The protein localises to the nucleus. The protein resides in the cytoplasm. Its function is as follows. Glucose-responsive transcription factor that regulates expression of several glucose transporter (HXT) genes in response to glucose. In the absence of glucose, it functions as a transcriptional repressor, whereas high concentrations of glucose cause it to function as a transcriptional activator. In cells growing on low levels of glucose, has a neutral role, neither repressing nor activating transcription. Binds the consensus binding site sequence 5'-CGGANNA-3', of which multiple copies are present in all HXT promoters regulated by RGT1. The protein is Glucose transport transcription regulator RGT1 (RGT1) of Saccharomyces cerevisiae (strain JAY291) (Baker's yeast).